We begin with the raw amino-acid sequence, 306 residues long: Nucleotide-binding protein MUL_1815 (306 aa).

ATP is bound at residue 29–36; the sequence is GLSGAGRG. Residue 80–83 participates in GTP binding; it reads DVRS.

Belongs to the RapZ-like family.

In terms of biological role, displays ATPase and GTPase activities. This Mycobacterium ulcerans (strain Agy99) protein is Nucleotide-binding protein MUL_1815.